A 159-amino-acid chain; its full sequence is Cytochrome c-type biogenesis protein CcmE (159 aa).

Topologically, residues 1–8 (MNPRRKTR) are cytoplasmic. The helical; Signal-anchor for type II membrane protein transmembrane segment at 9–29 (LWVALTVLAGLGLTMALVLYA) threads the bilayer. Residues 30 to 159 (LRANIDLFYT…PPQAYKDNRP (130 aa)) are Periplasmic-facing. Positions 130 and 134 each coordinate heme. The interval 130–159 (HDENYTPPEVKAAMDANHTRPPQAYKDNRP) is disordered.

The protein belongs to the CcmE/CycJ family.

The protein localises to the cell inner membrane. Heme chaperone required for the biogenesis of c-type cytochromes. Transiently binds heme delivered by CcmC and transfers the heme to apo-cytochromes in a process facilitated by CcmF and CcmH. The chain is Cytochrome c-type biogenesis protein CcmE from Cronobacter sakazakii (strain ATCC BAA-894) (Enterobacter sakazakii).